The primary structure comprises 355 residues: Peptide chain release factor 1 (355 aa).

The residue at position 230 (Gln230) is an N5-methylglutamine.

This sequence belongs to the prokaryotic/mitochondrial release factor family. In terms of processing, methylated by PrmC. Methylation increases the termination efficiency of RF1.

The protein resides in the cytoplasm. Its function is as follows. Peptide chain release factor 1 directs the termination of translation in response to the peptide chain termination codons UAG and UAA. In Geobacter metallireducens (strain ATCC 53774 / DSM 7210 / GS-15), this protein is Peptide chain release factor 1.